Here is a 471-residue protein sequence, read N- to C-terminus: Adenosylhomocysteinase (471 aa).

The substrate site is built by T60, D135, and E196. Position 197–199 (197–199 (TTT)) interacts with NAD(+). Residues K226 and D230 each contribute to the substrate site. Residues N231, 260–265 (GYGDVG), E283, N318, 339–341 (IGH), and N387 contribute to the NAD(+) site.

It belongs to the adenosylhomocysteinase family. The cofactor is NAD(+).

It localises to the cytoplasm. It catalyses the reaction S-adenosyl-L-homocysteine + H2O = L-homocysteine + adenosine. It participates in amino-acid biosynthesis; L-homocysteine biosynthesis; L-homocysteine from S-adenosyl-L-homocysteine: step 1/1. Functionally, may play a key role in the regulation of the intracellular concentration of adenosylhomocysteine. The protein is Adenosylhomocysteinase of Chlorobium phaeobacteroides (strain DSM 266 / SMG 266 / 2430).